The sequence spans 125 residues: MEDFKQPKLSYGEIVQMKEEQDAFWSCYHEFLRRNEDVLGEMCRRHGRKLPAYPKLPTYAPIRWVLKTKAIYDVRVDECKSCSHEEISRRDYNPIKKEGLKDLYDSGNYRYQVYYSSSCNRDKSD.

Belongs to the nanovirus U2 protein family.

The polypeptide is Protein U2 (DNA-U2) (Milk vetch dwarf virus (isolate N) (MDV)).